The chain runs to 370 residues: Platelet-derived growth factor D (370 aa).

The first 23 residues, methionine 1–alanine 23, serve as a signal peptide directing secretion. Positions arginine 52–valine 170 constitute a CUB domain. Cysteine 109 and cysteine 131 are oxidised to a cystine. A glycan (N-linked (GlcNAc...) asparagine) is linked at asparagine 276. Intrachain disulfides connect cysteine 302/cysteine 360 and cysteine 306/cysteine 362.

The protein belongs to the PDGF/VEGF growth factor family. Homodimer; disulfide-linked. Interacts with PDGFRB homodimers, and with heterodimers formed by PDGFRA and PDGFRB. Activated by proteolytic cleavage. Proteolytic removal of the N-terminal CUB domain releasing the core domain is necessary for unmasking the receptor-binding epitopes of the core domain. Cleavage after Arg-247 or Arg-249 by urokinase plasminogen activator gives rise to the active form. As to expression, expressed at high levels in developing heart, lung, kidney and some muscle derivatives. Moderately expressed in liver, brain and testis. In the kidney, localized to glomerular mesangial cells and vascular smooth muscle cells. Up-regulated in areas of renal fibrosis. In mice with unilateral ureteral obstruction, expressed in interstitial cells at day 4, with an increased to maximal expression at day 14.

It is found in the secreted. Its function is as follows. Growth factor that plays an essential role in the regulation of embryonic development, cell proliferation, cell migration, survival and chemotaxis. Potent mitogen for cells of mesenchymal origin. Plays an important role in wound healing. Has oncogenic potential and can induce tumor formation. Induces macrophage recruitment, increased interstitial pressure, and blood vessel maturation during angiogenesis. Can initiate events that lead to a mesangial proliferative glomerulonephritis, including influx of monocytes and macrophages and production of extracellular matrix. The sequence is that of Platelet-derived growth factor D (Pdgfd) from Mus musculus (Mouse).